A 206-amino-acid chain; its full sequence is GTP cyclohydrolase 1 (206 aa).

Residues cysteine 97, histidine 100, and cysteine 168 each coordinate Zn(2+).

This sequence belongs to the GTP cyclohydrolase I family. As to quaternary structure, toroid-shaped homodecamer, composed of two pentamers of five dimers.

The enzyme catalyses GTP + H2O = 7,8-dihydroneopterin 3'-triphosphate + formate + H(+). Its pathway is cofactor biosynthesis; 7,8-dihydroneopterin triphosphate biosynthesis; 7,8-dihydroneopterin triphosphate from GTP: step 1/1. This is GTP cyclohydrolase 1 from Chromobacterium violaceum (strain ATCC 12472 / DSM 30191 / JCM 1249 / CCUG 213 / NBRC 12614 / NCIMB 9131 / NCTC 9757 / MK).